The chain runs to 180 residues: Large ribosomal subunit protein uL16 (180 aa).

The protein belongs to the universal ribosomal protein uL16 family.

The chain is Large ribosomal subunit protein uL16 from Pyrobaculum aerophilum (strain ATCC 51768 / DSM 7523 / JCM 9630 / CIP 104966 / NBRC 100827 / IM2).